The primary structure comprises 438 residues: Porin AaxA (438 aa).

Residues 1–21 (MISFRFLLLSGLCALGISSYA) form the signal peptide.

Belongs to the OprB family.

The protein localises to the cell outer membrane. In terms of biological role, facilitates L-arginine uptake, as part of the AaxABC system. The arginine uptake by the bacterium in the macrophage may be a virulence factor against the host innate immune response. The sequence is that of Porin AaxA (aaxA) from Chlamydia pneumoniae (Chlamydophila pneumoniae).